The chain runs to 75 residues: Large ribosomal subunit protein bL31 (75 aa).

The protein belongs to the bacterial ribosomal protein bL31 family. Type A subfamily. Part of the 50S ribosomal subunit.

In terms of biological role, binds the 23S rRNA. This chain is Large ribosomal subunit protein bL31, found in Chlorobium phaeobacteroides (strain BS1).